A 135-amino-acid chain; its full sequence is Ribosome-binding factor A (135 aa).

It belongs to the RbfA family. As to quaternary structure, monomer. Binds 30S ribosomal subunits, but not 50S ribosomal subunits or 70S ribosomes.

It localises to the cytoplasm. Its function is as follows. One of several proteins that assist in the late maturation steps of the functional core of the 30S ribosomal subunit. Associates with free 30S ribosomal subunits (but not with 30S subunits that are part of 70S ribosomes or polysomes). Required for efficient processing of 16S rRNA. May interact with the 5'-terminal helix region of 16S rRNA. The polypeptide is Ribosome-binding factor A (Aliivibrio salmonicida (strain LFI1238) (Vibrio salmonicida (strain LFI1238))).